A 961-amino-acid chain; its full sequence is Ubiquitin carboxyl-terminal hydrolase 4 (961 aa).

A DUSP domain is found at 11-122; that stretch reads PDVETQKTEL…GQQPIVRKVV (112 aa). The segment at 27–216 is necessary for interaction with SART3; that stretch reads TLQRGAQWYL…LYQGQVLVIE (190 aa). The Nuclear export signal signature appears at 133–141; sequence VEVYLLELK. The Ubiquitin-like 1 domain occupies 142-226; sequence LCENSDPTNV…PQNEDGTWPR (85 aa). Residues 219–257 form a disordered region; the sequence is NEDGTWPRQTLQSKSSTAPSRNFTTSSKPSASPYSSMSA. Over residues 225-243 the composition is skewed to polar residues; the sequence is PRQTLQSKSSTAPSRNFTT. Residues 229–295 are required for USP4 activation by providing conformational flexibility between the DUSP and catalytic domains; that stretch reads LQSKSSTAPS…SYNCQEPPSP (67 aa). Residues 244-257 are compositionally biased toward low complexity; that stretch reads SSKPSASPYSSMSA. One can recognise a USP domain in the interval 302-921; sequence CGLGNLGNTC…AAYVLFYQRR (620 aa). Residue cysteine 311 is part of the active site. The interval 384 to 386 is regulates ubiquitin dissociation; sequence PQF. Positions 405–407 are necessary for interaction with RBL2; the sequence is LHE. A Phosphoserine modification is found at serine 445. The interval 459-463 is necessary for interaction with RB1 and RBL2; it reads LVCPE. Zn(2+)-binding residues include cysteine 461 and cysteine 464. Residues 483-571 enclose the Ubiquitin-like 2 domain; the sequence is LKKDRIMEVF…IFVYEICTTP (89 aa). The segment at 485–773 is interacts with DUSP and ubiquitin-like 1 domains and is required for USP4 activation; the sequence is KDRIMEVFLV…SQPQKKKKAA (289 aa). Residues 641–700 are disordered; that stretch reads SSPLEPGACNGSRGSYEGDEEEMDHQEEGKEQLSEVEESGEDSQGGDPTETTQKAKGPPR. A phosphoserine mark is found at serine 655, serine 674, and serine 679. The Nuclear localization signal motif lies at 765-770; the sequence is QPQKKK. Cysteine 797 and cysteine 800 together coordinate Zn(2+). Histidine 879 is a catalytic residue. The segment at 924–961 is disordered; it reads ECPSTSSPVSFPGSDGGAKLSSSQQDLGEEEAYTMDTN. The segment covering 950–961 has biased composition (acidic residues); sequence LGEEEAYTMDTN.

It belongs to the peptidase C19 family. USP4 subfamily. In terms of assembly, interacts with RB1 (both dephosphorylated and hypophosphorylated forms). Interacts with RBL1 and RBL2. Interacts with ADORA2A (via cytoplasmic C-terminus); the interaction is direct. Interacts with SART3; recruits USP4 to its substrate PRPF3. In terms of processing, phosphorylated at Ser-445 by PKB/AKT1 in response to EGF stimulus, promoting its ability deubiquitinate RHEB. Monoubiquitinated by TRIM21. Ubiquitination does not lead to its proteasomal degradation. Autodeubiquitinated. In terms of tissue distribution, expressed in hippocampus and striatum (at protein level).

The protein localises to the cytoplasm. The protein resides in the nucleus. The catalysed reaction is Thiol-dependent hydrolysis of ester, thioester, amide, peptide and isopeptide bonds formed by the C-terminal Gly of ubiquitin (a 76-residue protein attached to proteins as an intracellular targeting signal).. Its activity is regulated as follows. The completion of the deubiquitinase reaction is mediated by the DUSP and ubiquitin-like 1 domains which promotes the release of ubiquitin from the catalytic site enabling subsequent reactions to occur. Deubiquitinating enzyme that removes conjugated ubiquitin from target proteins. Deubiquitinates PDPK1. Deubiquitinates TRIM21. Deubiquitinates receptor ADORA2A which increases the amount of functional receptor at the cell surface. Deubiquitinates HAS2. Deubiquitinates RHEB in response to EGF signaling, promoting mTORC1 signaling. May regulate mRNA splicing through deubiquitination of the U4 spliceosomal protein PRPF3. This may prevent its recognition by the U5 component PRPF8 thereby destabilizing interactions within the U4/U6.U5 snRNP. May also play a role in the regulation of quality control in the ER. This Rattus norvegicus (Rat) protein is Ubiquitin carboxyl-terminal hydrolase 4 (Usp4).